The sequence spans 243 residues: uncharacterized protein (243 aa).

Over residues 1-18 (MSNSHYNNYQQQQPHSSN) the composition is skewed to low complexity. Residues 1–30 (MSNSHYNNYQQQQPHSSNGDPEYQHQQMVH) are disordered. In terms of domain architecture, AMMECR1 spans 38–232 (GHGMKTVAVP…MHYKEYREYQ (195 aa)).

This is an uncharacterized protein from Drosophila melanogaster (Fruit fly).